We begin with the raw amino-acid sequence, 426 residues long: Cell adhesion molecule CEACAM16 (426 aa).

The N-terminal stretch at 1–22 (MKMPLTWYSWFLLSAWILNTGA) is a signal peptide. An N-linked (GlcNAc...) asparagine glycan is attached at asparagine 38. Residues 77-96 (ETPGPAHTGREAVRPDGSLD) form a disordered region. Over residues 84 to 95 (TGREAVRPDGSL) the composition is skewed to basic and acidic residues. Ig-like C2-type domains follow at residues 134-219 (PPTV…LNLT) and 224-310 (PERV…ASVV). A disulfide bond links cysteine 155 and cysteine 202. Asparagine 217 carries an N-linked (GlcNAc...) asparagine glycan. A disulfide bond links cysteine 253 and cysteine 294.

Belongs to the immunoglobulin superfamily. CEA family. Homooligomer; can for homodimers and homotetramers. Interacts with TECTA and TECTB. Expressed in cochlear outer hair cells (OHC).

Its subcellular location is the secreted. Functionally, required for proper hearing, plays a role in maintaining the integrity of the tectorial membrane. The sequence is that of Cell adhesion molecule CEACAM16 from Mus musculus (Mouse).